Reading from the N-terminus, the 104-residue chain is Protein MGF 110-2L (104 aa).

Positions 1–19 (MRFFSYLGLLLAGLASLQG) are cleaved as a signal peptide.

The protein belongs to the asfivirus MGF 110 family.

Plays a role in virus cell tropism, and may be required for efficient virus replication in macrophages. The polypeptide is Protein MGF 110-2L (African swine fever virus (isolate Tick/South Africa/Pretoriuskop Pr4/1996) (ASFV)).